The primary structure comprises 232 residues: Octanoyltransferase (232 aa).

The BPL/LPL catalytic domain occupies E44–L219. Residues R83 to H90, A150 to G152, and G163 to S165 each bind substrate. Residue C181 is the Acyl-thioester intermediate of the active site.

Belongs to the LipB family.

The protein localises to the cytoplasm. It catalyses the reaction octanoyl-[ACP] + L-lysyl-[protein] = N(6)-octanoyl-L-lysyl-[protein] + holo-[ACP] + H(+). It functions in the pathway protein modification; protein lipoylation via endogenous pathway; protein N(6)-(lipoyl)lysine from octanoyl-[acyl-carrier-protein]: step 1/2. Functionally, catalyzes the transfer of endogenously produced octanoic acid from octanoyl-acyl-carrier-protein onto the lipoyl domains of lipoate-dependent enzymes. Lipoyl-ACP can also act as a substrate although octanoyl-ACP is likely to be the physiological substrate. This Xanthomonas axonopodis pv. citri (strain 306) protein is Octanoyltransferase.